A 2896-amino-acid chain; its full sequence is 3'-5' exoribonuclease HELZ2 (2896 aa).

2 consecutive C3H1-type zinc fingers follow at residues 90–114 and 217–246; these read VCHY…RSRE and GQPP…HSAV. A C2H2-type; atypical zinc finger spans residues 287–311; that stretch reads LYCPACLVTCHSQEAFENHCASSEH. The segment at 327–357 adopts a C3H1-type 3 zinc-finger fold; the sequence is SPPPGLSKFELCPKPDLCEYGDACTKAHSAQ. In terms of domain architecture, UvrD-like helicase ATP-binding spans 770–1126; it reads VALIAGWGPG…VVLSTVHTCQ (357 aa). 791-798 is a binding site for ATP; it reads GPFGTGKT. An interaction with THRAP3 region spans residues 810 to 1306; the sequence is RRPETKVLIC…ESTEAEDAEA (497 aa). Positions 914–917 match the DEAA box motif; that stretch reads DEAA. The residue at position 1253 (Ser1253) is a Phosphoserine. Short sequence motifs (LXXLL motif) lie at residues 1322 to 1326, 1365 to 1369, and 1420 to 1424; these read LRELL, LRKLL, and LVQLL. In terms of domain architecture, RNB spans 1581 to 1938; sequence REDCRAFLTF…VLQRQILLAL (358 aa). The LXXLL motif 4 motif lies at 2259–2263; sequence LEGLP. The segment at 2382 to 2896 is interaction with THRAP3; the sequence is PSRFLERQTY…RVCRRPTMPS (515 aa). One can recognise a UvrD-like helicase ATP-binding 2 domain in the interval 2400 to 2675; that stretch reads LNPSQNVAVR…HMLDTQYRMH (276 aa). 2421 to 2428 is an ATP binding site; sequence GPPGTGKT. Positions 2476–2480 match the LXXLL motif 5 motif; it reads LAGLL.

Belongs to the DNA2/NAM7 helicase family. As to quaternary structure, interacts with PPARA (via DNA-binding domain) and PPARG; the interaction stimulates the transcriptional activity of PPARA and PPARG. Interacts with THRAP3; the interaction is direct and HELZ2 and THRAP3 synergistically enhance the transcriptional activity of PPARG. It is probably part of the peroxisome proliferator activated receptor alpha interacting complex (PRIC). As to expression, expressed in various tissues including heart, pancreas, skeletal muscle, colon, spleen, liver, kidney, lung, peripheral blood and placenta.

Its subcellular location is the cytoplasm. The catalysed reaction is Exonucleolytic cleavage in the 3'- to 5'-direction to yield nucleoside 5'-phosphates.. The enzyme catalyses ATP + H2O = ADP + phosphate + H(+). Can degrade highly structured RNAs through its concerted ATP-dependent RNA helicase and 3' to 5' exoribonuclease activities. Shows a strong preference for pyrimidine over purine residues for its nuclease activity. Acts as a transcriptional coactivator for a number of nuclear receptors including PPARA, PPARG, THRA, THRB and RXRA. In Homo sapiens (Human), this protein is 3'-5' exoribonuclease HELZ2.